The primary structure comprises 674 residues: Sodium/myo-inositol cotransporter 2 (674 aa).

Topologically, residues Met1–Glu25 are extracellular. The helical transmembrane segment at Ala26 to Ser46 threads the bilayer. Residues Thr47–Lys56 lie on the Cytoplasmic side of the membrane. Residues Gly57–Ser77 traverse the membrane as a helical segment. Residues Asn78–Glu102 lie on the Extracellular side of the membrane. The chain crosses the membrane as a helical span at residues Leu103 to Gly123. Residues Gln124–Arg140 lie on the Cytoplasmic side of the membrane. The helical transmembrane segment at Ile141–Asp161 threads the bilayer. The Extracellular segment spans residues Met162 to Ala180. The chain crosses the membrane as a helical span at residues Ile181–Ile201. At Tyr202–Thr208 the chain is on the cytoplasmic side. Residues Leu209–Leu229 form a helical membrane-spanning segment. Over Glu230–Pro272 the chain is Extracellular. The helical transmembrane segment at Gly273 to Val293 threads the bilayer. The Cytoplasmic segment spans residues Gln294–Gly308. A helical membrane pass occupies residues Ser309–Val329. Residues Ser330–Arg374 lie on the Extracellular side of the membrane. Residues Gly375–Ser397 traverse the membrane as a helical segment. At Thr398–Met418 the chain is on the cytoplasmic side. A helical membrane pass occupies residues Ile419–Val439. The Extracellular portion of the chain corresponds to Gln440–Gln446. A helical membrane pass occupies residues Leu447–Ile467. Residues Met468 to Gly479 are Cytoplasmic-facing. A helical transmembrane segment spans residues Ala480–Ile500. Residues Tyr501–Tyr521 lie on the Extracellular side of the membrane. A helical transmembrane segment spans residues Leu522–Phe542. Residues Thr543 to Thr653 lie on the Cytoplasmic side of the membrane. Residues Glu567–Gly589 form a disordered region. Over residues Thr578–Gly589 the composition is skewed to polar residues. A helical membrane pass occupies residues Leu654 to Ala674.

The protein belongs to the sodium:solute symporter (SSF) (TC 2.A.21) family.

The protein localises to the membrane. It localises to the apical cell membrane. It catalyses the reaction myo-inositol(out) + 2 Na(+)(out) = myo-inositol(in) + 2 Na(+)(in). It carries out the reaction 1D-chiro-inositol(out) + 2 Na(+)(out) = 1D-chiro-inositol(in) + 2 Na(+)(in). The enzyme catalyses D-glucose(out) + 2 Na(+)(out) = D-glucose(in) + 2 Na(+)(in). The catalysed reaction is D-xylose(out) + 2 Na(+)(out) = D-xylose(in) + 2 Na(+)(in). With respect to regulation, MI transport activity inhibited by D-chiro-inositol (DCI), phlorizin (Pz) and sodium (Na(+)). Insulin increases D-chiro-inositol uptake. Functionally, involved in the sodium-dependent cotransport of myo-inositol (MI) with a Na(+):MI stoichiometry of 2:1. Exclusively responsible for apical MI transport and absorption in intestine. Can also transport D-chiro-inositol (DCI) but not L-fucose. Exhibits stereospecific cotransport of both D-glucose and D-xylose. May induce apoptosis through the TNF-alpha, PDCD1 pathway. May play a role in the regulation of MI concentration in serum, involving reabsorption in at least the proximal tubule of the kidney. This chain is Sodium/myo-inositol cotransporter 2, found in Bos taurus (Bovine).